The chain runs to 218 residues: Protein GrpE (218 aa).

Residues 1–75 (MTTPNGMPDN…DVDPDLDGDG (75 aa)) are disordered. The segment covering 23–40 (SADRAEQAAEEAAARQAE) has biased composition (basic and acidic residues). A compositionally biased stretch (acidic residues) spans 48–75 (SEEEISPELEAEINDLLSDVDPDLDGDG).

The protein belongs to the GrpE family. As to quaternary structure, homodimer.

It is found in the cytoplasm. Participates actively in the response to hyperosmotic and heat shock by preventing the aggregation of stress-denatured proteins, in association with DnaK and GrpE. It is the nucleotide exchange factor for DnaK and may function as a thermosensor. Unfolded proteins bind initially to DnaJ; upon interaction with the DnaJ-bound protein, DnaK hydrolyzes its bound ATP, resulting in the formation of a stable complex. GrpE releases ADP from DnaK; ATP binding to DnaK triggers the release of the substrate protein, thus completing the reaction cycle. Several rounds of ATP-dependent interactions between DnaJ, DnaK and GrpE are required for fully efficient folding. In Corynebacterium glutamicum (strain ATCC 13032 / DSM 20300 / JCM 1318 / BCRC 11384 / CCUG 27702 / LMG 3730 / NBRC 12168 / NCIMB 10025 / NRRL B-2784 / 534), this protein is Protein GrpE.